A 167-amino-acid chain; its full sequence is MSQQKMRIHNQYVKDLSLENPNSPFLSLKEVPNIDVMVNVNSVKLEGSEGTEGESEEKSFHEITLHIEAKAMIKDENIKDGVAFICETKYCGIFSVENFAELSTEEVNRALFIGGPTFLFPFAREVIARVTSSGGFPPLMLDPIDFEAMYEQQSRQQKSNASNENFN.

Belongs to the SecB family. In terms of assembly, homotetramer, a dimer of dimers. One homotetramer interacts with 1 SecA dimer.

The protein localises to the cytoplasm. Its function is as follows. One of the proteins required for the normal export of preproteins out of the cell cytoplasm. It is a molecular chaperone that binds to a subset of precursor proteins, maintaining them in a translocation-competent state. It also specifically binds to its receptor SecA. The protein is Protein-export protein SecB of Wolbachia sp. subsp. Brugia malayi (strain TRS).